The sequence spans 408 residues: Argininosuccinate synthase (408 aa).

Residues 11 to 19 and Ala38 each bind ATP; that span reads AYSGGLDTS. The L-citrulline site is built by Tyr91 and Ser96. Gly121 provides a ligand contact to ATP. L-aspartate is bound by residues Thr123, Asn127, and Asp128. L-citrulline is bound at residue Asn127. Residues Arg131, Ser182, Ser191, Glu267, and Tyr279 each contribute to the L-citrulline site.

The protein belongs to the argininosuccinate synthase family. Type 1 subfamily. Homotetramer.

It is found in the cytoplasm. It catalyses the reaction L-citrulline + L-aspartate + ATP = 2-(N(omega)-L-arginino)succinate + AMP + diphosphate + H(+). The protein operates within amino-acid biosynthesis; L-arginine biosynthesis; L-arginine from L-ornithine and carbamoyl phosphate: step 2/3. This Zymomonas mobilis subsp. mobilis (strain ATCC 31821 / ZM4 / CP4) protein is Argininosuccinate synthase.